A 185-amino-acid chain; its full sequence is Elongation factor P (185 aa).

This sequence belongs to the elongation factor P family.

It localises to the cytoplasm. It functions in the pathway protein biosynthesis; polypeptide chain elongation. Involved in peptide bond synthesis. Stimulates efficient translation and peptide-bond synthesis on native or reconstituted 70S ribosomes in vitro. Probably functions indirectly by altering the affinity of the ribosome for aminoacyl-tRNA, thus increasing their reactivity as acceptors for peptidyl transferase. This chain is Elongation factor P, found in Listeria innocua serovar 6a (strain ATCC BAA-680 / CLIP 11262).